The following is a 142-amino-acid chain: Transcription antitermination protein NusB (142 aa).

The protein belongs to the NusB family.

Functionally, involved in transcription antitermination. Required for transcription of ribosomal RNA (rRNA) genes. Binds specifically to the boxA antiterminator sequence of the ribosomal RNA (rrn) operons. The protein is Transcription antitermination protein NusB of Trichlorobacter lovleyi (strain ATCC BAA-1151 / DSM 17278 / SZ) (Geobacter lovleyi).